The chain runs to 897 residues: Protein translocase subunit SecA (897 aa).

Residues Gln-87, 105-109 (GEGKT), and Asp-512 contribute to the ATP site. The interval 846–897 (EEEQQKQARKKMVFNLVDEDETSEPSKSKKLAGRNEPCPCGSGKKYKKCCGK) is disordered. Cys-883, Cys-885, Cys-894, and Cys-895 together coordinate Zn(2+).

This sequence belongs to the SecA family. As to quaternary structure, monomer and homodimer. Part of the essential Sec protein translocation apparatus which comprises SecA, SecYEG and auxiliary proteins SecDF-YajC and YidC. It depends on Zn(2+) as a cofactor.

Its subcellular location is the cell inner membrane. It localises to the cytoplasm. The catalysed reaction is ATP + H2O + cellular proteinSide 1 = ADP + phosphate + cellular proteinSide 2.. In terms of biological role, part of the Sec protein translocase complex. Interacts with the SecYEG preprotein conducting channel. Has a central role in coupling the hydrolysis of ATP to the transfer of proteins into and across the cell membrane, serving as an ATP-driven molecular motor driving the stepwise translocation of polypeptide chains across the membrane. This is Protein translocase subunit SecA from Geobacter sulfurreducens (strain ATCC 51573 / DSM 12127 / PCA).